Consider the following 57-residue polypeptide: uncharacterized protein (57 aa).

This is an uncharacterized protein from Halorubrum sp. PV6 (HRPV-1).